Here is a 368-residue protein sequence, read N- to C-terminus: ATP-dependent (S)-NAD(P)H-hydrate dehydratase (368 aa).

Positions 13 to 357 (LFKKVRKIVP…DEVHESFLEL (345 aa)) constitute a YjeF C-terminal domain. Residues Gly125 and 178 to 184 (NVNEFSR) contribute to the (6S)-NADPHX site. ATP-binding positions include 231–235 (KGPHD) and 250–259 (GGLKRSGGQG). Asp260 is a binding site for (6S)-NADPHX.

The protein belongs to the NnrD/CARKD family. The cofactor is Mg(2+).

It localises to the cytoplasm. It carries out the reaction (6S)-NADHX + ATP = ADP + phosphate + NADH + H(+). It catalyses the reaction (6S)-NADPHX + ATP = ADP + phosphate + NADPH + H(+). Functionally, catalyzes the dehydration of the S-form of NAD(P)HX at the expense of ATP, which is converted to ADP. Together with NAD(P)HX epimerase, which catalyzes the epimerization of the S- and R-forms, the enzyme allows the repair of both epimers of NAD(P)HX, a damaged form of NAD(P)H that is a result of enzymatic or heat-dependent hydration. In Aspergillus fumigatus (strain ATCC MYA-4609 / CBS 101355 / FGSC A1100 / Af293) (Neosartorya fumigata), this protein is ATP-dependent (S)-NAD(P)H-hydrate dehydratase.